The following is a 958-amino-acid chain: Unconventional myosin-Ih (958 aa).

Positions 12 to 691 constitute a Myosin motor domain; it reads GVQDFVLLDA…TLFATEDAFE (680 aa). 105-112 contributes to the ATP binding site; the sequence is GESGAGKT. S365 is subject to Phosphoserine. An actin-binding region spans residues 568–590; it reads LSSLLEILISKEPSYIRCIKPNE. 2 IQ domains span residues 694 to 716 and 717 to 746; these read KHQL…EYMK and KRQA…AVQI. The 183-residue stretch at 773–955 folds into the TH1 domain; that stretch reads RKNYILNLRY…NGQLRVVSAG (183 aa).

It belongs to the TRAFAC class myosin-kinesin ATPase superfamily. Myosin family. Highly expressed in the central nervous system, including the forebrain, midbrain and lower medulla. In the lower medulla, it is broadly expressed throughout the reticular formation. It is expressed in the retrotrapezoid nucleus and the nucleus of the solitary tract, as well as motor neurons of the facial, vagal and ambiguus nuclei. Expressed in neonatal inner-ear organs.

Its function is as follows. Myosins are actin-based motor molecules with ATPase activity. Unconventional myosins serve in intracellular movements. Their highly divergent tails are presumed to bind to membranous compartments, which would be moved relative to actin filaments. The chain is Unconventional myosin-Ih (Myo1h) from Mus musculus (Mouse).